The following is a 293-amino-acid chain: Glutamyl-Q tRNA(Asp) synthetase (293 aa).

Residues 8 to 12 and glutamate 44 contribute to the L-glutamate site; that span reads RFAPT. Residues 11-21 carry the 'HIGH' region motif; the sequence is PTPSGYLHFGS. Positions 100, 102, 114, and 118 each coordinate Zn(2+). L-glutamate contacts are provided by tyrosine 171 and arginine 189. A 'KMSKS' region motif is present at residues 227–231; that stretch reads KLGKS. Lysine 230 lines the ATP pocket.

This sequence belongs to the class-I aminoacyl-tRNA synthetase family. GluQ subfamily. Zn(2+) is required as a cofactor.

Its function is as follows. Catalyzes the tRNA-independent activation of glutamate in presence of ATP and the subsequent transfer of glutamate onto a tRNA(Asp). Glutamate is transferred on the 2-amino-5-(4,5-dihydroxy-2-cyclopenten-1-yl) moiety of the queuosine in the wobble position of the QUC anticodon. This chain is Glutamyl-Q tRNA(Asp) synthetase, found in Pseudomonas aeruginosa (strain LESB58).